A 565-amino-acid polypeptide reads, in one-letter code: Small ribosomal subunit protein bS1 (565 aa).

S1 motif domains follow at residues 30 to 96, 114 to 180, 201 to 269, 286 to 356, 373 to 443, and 454 to 529; these read SSVI…LSRD, NEKV…VSRR, GQVI…LGMK, NARF…LGLK, GSTV…LGVK, and GDVK…VSIK.

The protein belongs to the bacterial ribosomal protein bS1 family. The initiator methionine may be removed.

In terms of biological role, binds mRNA; thus facilitating recognition of the initiation point. It is needed to translate mRNA with a short Shine-Dalgarno (SD) purine-rich sequence. In Rhodopseudomonas palustris (strain ATCC BAA-98 / CGA009), this protein is Small ribosomal subunit protein bS1 (rpsA).